We begin with the raw amino-acid sequence, 937 residues long: Aconitate hydratase A (937 aa).

Positions 439, 505, and 508 each coordinate [4Fe-4S] cluster. A disordered region spans residues 898-921 (KKESKSTQSTTSKGCGSADTSSET).

Belongs to the aconitase/IPM isomerase family. Monomer. Requires [4Fe-4S] cluster as cofactor.

It carries out the reaction citrate = D-threo-isocitrate. It catalyses the reaction (2S,3R)-3-hydroxybutane-1,2,3-tricarboxylate = 2-methyl-cis-aconitate + H2O. It functions in the pathway carbohydrate metabolism; tricarboxylic acid cycle; isocitrate from oxaloacetate: step 2/2. It participates in organic acid metabolism; propanoate degradation. Functionally, involved in the catabolism of short chain fatty acids (SCFA) via the tricarboxylic acid (TCA)(acetyl degradation route) and probably the 2-methylcitrate cycle I (propionate degradation route). Catalyzes the reversible isomerization of citrate to isocitrate via cis-aconitate. Could catalyze the hydration of 2-methyl-cis-aconitate to yield (2R,3S)-2-methylisocitrate. The apo form of AcnA functions as a RNA-binding regulatory protein. The chain is Aconitate hydratase A (acn) from Francisella tularensis subsp. holarctica (strain LVS).